A 987-amino-acid chain; its full sequence is MESSLYDEFGNYVGPEIESDRDSDDEVEDEDLQDKHLEENGSDGEQGPGGSNGWITTINDVEMENQIVLPEDKKYYPTAEEVYGEDVETLVMDEDEQPLEQPIIKPVRDIRFEVGVKDQATYVSTQFLIGLMSNPALVRNVALVGHLQHGKTVFMDMLVEQTHHMSTFNAKNEKHMKYTDTRVDEQERNISIKAVPMSLVLEDSRSKSYLCNIMDTPGHVNFSDEMTASLRLADGAVLIVDAAEGVMVNTERAIRHAIQDHLPIVVVINKVDRLITELKLPPRDAYYKLRHTIEVINNHISAASTTAGDLPLIDPAAGNVCFASGTAGWSFTLQSFAKMYAKLHGVAMDVDKFASRLWGDVYYHSDTRVFKRSPPVGGGERAFVQFILEPLYKIYSQVIGEHKKSVETTLAELGVTLSNSAYKLNVRPLLRLACSSVFGSASGFTDMLVKHIPSPREAAARKVDHSYTGTKDSPIYESMVECDPSGPLMVNVTKLYPKSDTSVFDVFGRVYSGRLQTGQSVRVLGEGYSPEDEEDMTIKEVTKLWIYQARYRIPVSSAPPGSWVLIEGVDASIMKTATLCNASYDEDVYIFRALQFNTLPVVKTATEPLNPSELPKMVEGLRKISKSYPLAITKVEESGEHTILGTGELYLDSIMKDLRELYSEVEVKVADPVVSFCETVVESSSMKCFAETPNKKNKITMIAEPLDRGLAEDIENGVVSIDWNRKQLGDFFRTKYDWDLLAARSIWAFGPDKQGPNILLDDTLPTEVDRNLMMAVKDSIVQGFQWGAREGPLCDEPIRNVKFKIVDARIAPEPLHRGSGQMIPTARRVAYSAFLMATPRLMEPVYYVEIQTPIDCVTAIYTVLSRRRGHVTSDVPQPGTPAYIVKAFLPVIESFGFETDLRYHTQGQAFCLSVFDHWAIVPGDPLDKAIQLRPLEPAPIQHLAREFMVKTRRRKGMSEDVSGNKFFDEAMMVELAQQTGDLHLQMI.

The interval 1–54 (MESSLYDEFGNYVGPEIESDRDSDDEVEDEDLQDKHLEENGSDGEQGPGGSNGW) is disordered. Acidic residues predominate over residues 17–32 (IESDRDSDDEVEDEDL). The 287-residue stretch at 136–422 (ALVRNVALVG…LGVTLSNSAY (287 aa)) folds into the tr-type G domain. The interval 145-152 (GHLQHGKT) is G1. 145–152 (GHLQHGKT) lines the GTP pocket. The segment at 189 to 193 (NISIK) is G2. Residues 215-218 (DTPG) are G3. GTP-binding positions include 215 to 219 (DTPGH) and 269 to 272 (NKVD). The segment at 269–272 (NKVD) is G4. The G5 stretch occupies residues 395 to 397 (YSQ).

Belongs to the TRAFAC class translation factor GTPase superfamily. Classic translation factor GTPase family. In terms of assembly, interacts with BRR2A and PRP8A. Expressed in flower buds, open flowers and siliques. Expressed at low levels in rosettes leaves, cauline leaves and stems.

The protein localises to the nucleus speckle. Its function is as follows. Splicing factor involved in pre-mRNA splicing and component of the spliceosome. Essential for reproduction. In female gametophyte, is necessary for the egg cell and central cell fate determination and hence reproductive success. Involved in a mechanism that prevents accessory cells from adopting gametic cell fate. Is necessary to restrict LIS expression to interfere with egg-cell specification. Probable component of U5 small nuclear ribonucleoprotein (snRNP) that is required for pre-mRNA splicing. Plays an essential role in female gametogenesis and embryo development. Required for the control of polarized cell growth and cell proliferation during floral organ morphogenesis. The polypeptide is 110 kDa U5 small nuclear ribonucleoprotein component CLO (Arabidopsis thaliana (Mouse-ear cress)).